Consider the following 319-residue polypeptide: ADP-ribosyl cyclase/cyclic ADP-ribose hydrolase 2 (319 aa).

A signal peptide spans 1–33; sequence MAVQACALSLRLGLWMSLLLPVLPGAGARAAGA. 3 disulfide bridges follow: cysteine 52/cysteine 68, cysteine 84/cysteine 164, and cysteine 145/cysteine 158. Asparagine 67 and asparagine 96 each carry an N-linked (GlcNAc...) asparagine glycan. An NAD(+)-binding site is contributed by tryptophan 110. Position 110 (tryptophan 110) interacts with nicotinamide. Asparagine 149 carries N-linked (GlcNAc...) asparagine glycosylation. Tryptophan 173 is an NAD(+) binding site. The N-linked (GlcNAc...) asparagine glycan is linked to asparagine 193. Glutamate 211 is a binding site for NAD(+). Cystine bridges form between cysteine 239-cysteine 260 and cysteine 272-cysteine 281. Residue serine 294 is the site of GPI-anchor amidated serine attachment. Residues 295–319 constitute a propeptide that is removed on maturation; the sequence is PALHAIGDISLIISLLVALASSSQA.

It belongs to the ADP-ribosyl cyclase family. Homodimer. Pancreatic islets, kidney, spleen, heart, thymus, intestine and salivary gland.

It is found in the cell membrane. The catalysed reaction is NAD(+) + H2O = ADP-D-ribose + nicotinamide + H(+). It carries out the reaction NAD(+) = cyclic ADP-beta-D-ribose + nicotinamide + H(+). The enzyme catalyses cyclic ADP-beta-D-ribose + H2O = ADP-D-ribose. Functionally, catalyzes both the synthesis of cyclic ADP-beta-D-ribose (cADPR) from NAD(+), and its hydrolysis to ADP-D-ribose (ADPR). Cyclic ADPR is known to serve as an endogenous second messenger that elicits calcium release from intracellular stores, and thus regulates the mobilization of intracellular calcium. May be involved in pre-B-cell growth. This is ADP-ribosyl cyclase/cyclic ADP-ribose hydrolase 2 (Bst1) from Rattus norvegicus (Rat).